Consider the following 81-residue polypeptide: MGKISLMLRQIVCLPIKMYQYFISPLITPCCRYYPSCSEYADSAIKHYGVIKGLLMALNRLSRCHPWSKGGYDPLFPNDKN.

The protein belongs to the UPF0161 family.

It is found in the cell inner membrane. Could be involved in insertion of integral membrane proteins into the membrane. This chain is Putative membrane protein insertion efficiency factor, found in Legionella pneumophila subsp. pneumophila (strain Philadelphia 1 / ATCC 33152 / DSM 7513).